The primary structure comprises 60 residues: uncharacterized protein (60 aa).

A disordered region spans residues 27–50; it reads VKNNNNNNNNNNNNNNNNNNNNNK. Low complexity predominate over residues 29–49; the sequence is NNNNNNNNNNNNNNNNNNNNN.

This is an uncharacterized protein from Dictyostelium discoideum (Social amoeba).